Reading from the N-terminus, the 360-residue chain is Phenylalanine--tRNA ligase alpha subunit (360 aa).

E260 contacts Mg(2+).

The protein belongs to the class-II aminoacyl-tRNA synthetase family. Phe-tRNA synthetase alpha subunit type 1 subfamily. Tetramer of two alpha and two beta subunits. The cofactor is Mg(2+).

It localises to the cytoplasm. The enzyme catalyses tRNA(Phe) + L-phenylalanine + ATP = L-phenylalanyl-tRNA(Phe) + AMP + diphosphate + H(+). The protein is Phenylalanine--tRNA ligase alpha subunit of Methylobacterium nodulans (strain LMG 21967 / CNCM I-2342 / ORS 2060).